A 194-amino-acid polypeptide reads, in one-letter code: CASP-like protein 2C2 (194 aa).

Residues 1-27 lie on the Cytoplasmic side of the membrane; sequence MAAGQPRPPPPPSSVRTERVLRAACAA. A helical membrane pass occupies residues 28 to 48; that stretch reads MAAAGALLLGFSAETKTVIFV. The Extracellular segment spans residues 49-58; it reads QKKAVPKDVQ. Residues 59-79 form a helical membrane-spanning segment; the sequence is ALWVLIVAAAAAAAYHAAQLA. At 80–113 the chain is on the cytoplasmic side; that stretch reads RCLCMDRLAGGGGGCRRLRRAVACATFLLDKGCA. The chain crosses the membrane as a helical span at residues 114–134; sequence YMVLATTVAALQACFVGLLGV. The Extracellular portion of the chain corresponds to 135–152; it reads EALQWSKLCNIYTRFCEQ. Residues 153–173 traverse the membrane as a helical segment; it reads AAAGMVCSLVAAAGMAVLSAF. Residues 174–194 lie on the Cytoplasmic side of the membrane; the sequence is SARDLFRRRRPCSPCVQVQQV.

The protein belongs to the Casparian strip membrane proteins (CASP) family. As to quaternary structure, homodimer and heterodimers.

It is found in the cell membrane. In Sorghum bicolor (Sorghum), this protein is CASP-like protein 2C2.